A 79-amino-acid chain; its full sequence is Morintide mO1 (79 aa).

A signal peptide spans 1-20 (MAKLSFLSLFLLCLVATATA). Residues 21 to 63 (QNCGRQAGNRACANQLCCSQYGFCGSTSEYCSRANGCQSNCRG) enclose the Chitin-binding type-1 domain. Cystine bridges form between C23–C38, C32–C44, C37–C51, and C57–C61. A propeptide spanning residues 64–79 (GGGADGAGGEAGGGGP) is cleaved from the precursor.

In terms of tissue distribution, leaves (at protein level).

In terms of biological role, chitin-binding protein which functions in defense against chitin-containing fungal pathogens. Inhibits the growth of budding hyphae in A.alternata and A.brassiciola. The protein is Morintide mO1 of Moringa oleifera (Horseradish tree).